Consider the following 234-residue polypeptide: Transcription factor ILR3 (234 aa).

A disordered region spans residues 34-85 (QPIGVSSNSSAGVDGSAGNSEASKEPGSKKRGRCESSSATSSKACREKQRRD). The span at 36-54 (IGVSSNSSAGVDGSAGNSE) shows a compositional bias: polar residues. One can recognise a bHLH domain in the interval 71-122 (SATSSKACREKQRRDRLNDKFMELGAILEPGNPPKTDKAAILVDAVRMVTQL).

Homodimer. Interacts with BTS and BHLH47/PYE. As to expression, widely expressed throughout development, mostly in vasculatures.

It localises to the nucleus. Its function is as follows. Transcription factor. Plays a role in resistance to amide-linked indole-3-acetic acid (IAA) conjugates such as IAA-Leu and IAA-Phe. May regulate gene expression in response to metal homeostasis changes. This Arabidopsis thaliana (Mouse-ear cress) protein is Transcription factor ILR3 (ILR3).